Reading from the N-terminus, the 59-residue chain is Large ribosomal subunit protein bL33 (59 aa).

This sequence belongs to the bacterial ribosomal protein bL33 family.

The chain is Large ribosomal subunit protein bL33 from Neorickettsia sennetsu (strain ATCC VR-367 / Miyayama) (Ehrlichia sennetsu).